The sequence spans 538 residues: Dihomomethionine N-hydroxylase (538 aa).

Residues 8-28 (LPYPFHILLVFILSMASITLL) form a helical membrane-spanning segment.

The protein belongs to the cytochrome P450 family. It depends on heme as a cofactor. Highly expressed in cotyledons, leaves, stems and siliques. Detected in flowers and lateral roots, but not in the main root. Expressed only in the vascular bundles in apical plant parts.

It is found in the endoplasmic reticulum membrane. It catalyses the reaction an L-polyhomomethionine + 2 reduced [NADPH--hemoprotein reductase] + 2 O2 = an (E)-omega-(methylsulfanyl)-alkanal oxime + 2 oxidized [NADPH--hemoprotein reductase] + CO2 + 3 H2O + 2 H(+). It carries out the reaction L-dihomomethionine + 2 reduced [NADPH--hemoprotein reductase] + 2 O2 = (E)-5-(methylsulfanyl)pentanal oxime + 2 oxidized [NADPH--hemoprotein reductase] + CO2 + 3 H2O + 2 H(+). The catalysed reaction is L-trihomomethionine + 2 reduced [NADPH--hemoprotein reductase] + 2 O2 = (E)-6-(methylsulfanyl)hexanal oxime + 2 oxidized [NADPH--hemoprotein reductase] + CO2 + 3 H2O + 2 H(+). Catalyzes the conversion of the short chain elongated methionines di-, tri-, and tetrahomomethionine to their respective aldoximes 5-methylthiopentanaldoxime, 6-methylthiohexanaldoxime, and 7-methylheptanaldoxime. This Arabidopsis thaliana (Mouse-ear cress) protein is Dihomomethionine N-hydroxylase (CYP79F1).